A 277-amino-acid polypeptide reads, in one-letter code: Carbonyl reductase [NADPH] 1 (277 aa).

NADP(+)-binding positions include 10–34 (VTGS…GEVV), 63–64 (DI), and Asn-90. Position 30 is a phosphoserine (Ser-30). Glutathione-binding positions include 95–97 (FKV) and Gln-106. Substrate is bound at residue Ser-140. 193-194 (AY) is a binding site for glutathione. Tyr-194 functions as the Proton acceptor in the catalytic mechanism. Residues 194–198 (YGVTK) and 231–233 (VRT) each bind NADP(+).

The protein belongs to the short-chain dehydrogenases/reductases (SDR) family. In terms of assembly, monomer.

It localises to the cytoplasm. It carries out the reaction a secondary alcohol + NADP(+) = a ketone + NADPH + H(+). It catalyses the reaction prostaglandin F2alpha + NADP(+) = prostaglandin E2 + NADPH + H(+). The enzyme catalyses prostaglandin E1 + NADP(+) = 15-oxoprostaglandin E1 + NADPH + H(+). The catalysed reaction is prostaglandin D2 + NADP(+) = 15-oxoprostaglandin D2 + NADPH + H(+). It carries out the reaction menadione + NADPH + H(+) = menadiol + NADP(+). It catalyses the reaction prostaglandin E2 + NADP(+) = 15-oxoprostaglandin E2 + NADPH + H(+). The enzyme catalyses prostaglandin F2alpha + NADP(+) = 15-oxoprostaglandin F2alpha + NADPH + H(+). The catalysed reaction is daunorubicin + NADPH + H(+) = 13-dihydrodaunorubicin + NADP(+). It carries out the reaction S-nitrosoglutathione + NADPH + H(+) = S-(hydroxysulfenamide)glutathione + NADP(+). It catalyses the reaction a primary alcohol + NADP(+) = an aldehyde + NADPH + H(+). The enzyme catalyses cortisol + NADPH + H(+) = 20beta-dihydrocortisol + NADP(+). The catalysed reaction is corticosterone + NADPH + H(+) = 20beta-dihydrocorticosterone + NADP(+). NADPH-dependent reductase with broad substrate specificity. Catalyzes the reduction of a wide variety of carbonyl compounds including quinones, prostaglandins, menadione, plus various xenobiotics. Catalyzes the reduction of the antitumor anthracyclines doxorubicin and daunorubicin to the cardiotoxic compounds doxorubicinol and daunorubicinol. Can convert prostaglandin E to prostaglandin F2-alpha. Can bind glutathione, which explains its higher affinity for glutathione-conjugated substrates. Catalyzes the reduction of S-nitrosoglutathione. In addition, participates in the glucocorticoid metabolism by catalyzing the NADPH-dependent cortisol/corticosterone into 20beta-dihydrocortisol (20b-DHF) or 20beta-corticosterone (20b-DHB), which are weak agonists of NR3C1 and NR3C2 in adipose tissue. The sequence is that of Carbonyl reductase [NADPH] 1 from Macaca fascicularis (Crab-eating macaque).